The primary structure comprises 237 residues: ADTIVAVELDSYPNTDIGDPNYPHIGIDIKSIRSKSTARWNMQTGKVGTVHISYNSVAKRLSAVVSYSGSSSTTVSYDVDLNNVLPEWVRVGLSATTGLYKETNTILSWSFTSKLKTNSIADENSLHFSFHKFSQNPKDLILQGDAFTDSDGNLELTKVSSSGDPQGNSVGRALFYAPVHIWESSAVVASFDATFTFLIKSPDREPADGITFFIANTDTSIPSGSGGRLLGLFPDAN.

Residues E8 and D10 each contribute to the Mn(2+) site. Ca(2+) is bound by residues D10, Y12, N14, and D19. Y12 contributes to the a carbohydrate binding site. Positions 19, 24, and 34 each coordinate Mn(2+). 99–100 serves as a coordination point for a carbohydrate; the sequence is LY. Ca(2+) is bound at residue D208. R228 contacts a carbohydrate.

This sequence belongs to the leguminous lectin family. As to quaternary structure, homotetramer. The beta and gamma chains are produced by partial proteolytic processing of the lectin alpha chain by an asparaginyl endopeptidase. Mixture of 60% alpha lectin and 40% of its beta and gamma proteolytic fragments.

In terms of biological role, D-mannose/D-glucose-binding lectin. Has anti-inflammatory activity in rats. Induces histamine release in mast cells from rat. Induces lymphocyte proliferation and IFNG production. Shows toxicity against the aquatic snail B.glabrata at concentrations higher than 50 ug/ml. The sequence is that of Lectin alpha chain from Dioclea grandiflora (Mucana).